The chain runs to 282 residues: Bis(5'-nucleosyl)-tetraphosphatase, symmetrical (282 aa).

It belongs to the Ap4A hydrolase family.

The enzyme catalyses P(1),P(4)-bis(5'-adenosyl) tetraphosphate + H2O = 2 ADP + 2 H(+). Functionally, hydrolyzes diadenosine 5',5'''-P1,P4-tetraphosphate to yield ADP. The protein is Bis(5'-nucleosyl)-tetraphosphatase, symmetrical of Burkholderia pseudomallei (strain 1106a).